We begin with the raw amino-acid sequence, 346 residues long: uncharacterized protein (346 aa).

Belongs to the Gfo/Idh/MocA family.

This is an uncharacterized protein from Escherichia coli (strain K12).